The chain runs to 187 residues: Probable chemoreceptor glutamine deamidase CheD (187 aa).

Residues 164–187 (APQDVRRPTPPPMPAVASGDVDLF) form a disordered region.

It belongs to the CheD family.

The catalysed reaction is L-glutaminyl-[protein] + H2O = L-glutamyl-[protein] + NH4(+). Probably deamidates glutamine residues to glutamate on methyl-accepting chemotaxis receptors (MCPs), playing an important role in chemotaxis. In Caulobacter vibrioides (strain ATCC 19089 / CIP 103742 / CB 15) (Caulobacter crescentus), this protein is Probable chemoreceptor glutamine deamidase CheD.